Here is a 329-residue protein sequence, read N- to C-terminus: Octaprenyl diphosphate synthase (329 aa).

Isopentenyl diphosphate contacts are provided by lysine 51, arginine 54, and histidine 83. 2 residues coordinate Mg(2+): aspartate 90 and aspartate 94. An all-trans-polyprenyl diphosphate is bound at residue arginine 99. Residue arginine 100 participates in isopentenyl diphosphate binding. Residues lysine 176, threonine 177, and glutamine 214 each coordinate an all-trans-polyprenyl diphosphate.

The protein belongs to the FPP/GGPP synthase family. It depends on Mg(2+) as a cofactor.

The enzyme catalyses 5 isopentenyl diphosphate + (2E,6E)-farnesyl diphosphate = all-trans-octaprenyl diphosphate + 5 diphosphate. Its function is as follows. Supplies octaprenyl diphosphate, the precursor for the side chain of the isoprenoid quinones ubiquinone and menaquinone. This is Octaprenyl diphosphate synthase (ispB) from Haemophilus influenzae (strain ATCC 51907 / DSM 11121 / KW20 / Rd).